The sequence spans 5628 residues: Polyketide synthase ThaG (5628 aa).

A Ketosynthase family 3 (KS3) 1 domain is found at 13–448 (HDDIAVIGIA…GTNAHVVLRE (436 aa)). Residues cysteine 184, histidine 319, and histidine 361 each act as for beta-ketoacyl synthase 1 activity in the active site. Disordered regions lie at residues 552 to 613 (GNLV…DGPT) and 1156 to 1183 (ASPG…RAEA). Over residues 559–589 (GPHDEQADHDGSGEHGEHGERARAGADDLSR) the composition is skewed to basic and acidic residues. A compositionally biased stretch (low complexity) spans 1156 to 1173 (ASPGAASSGAAAPNAASD). Residues 1174–1183 (ASRDTERAEA) are compositionally biased toward basic and acidic residues. The Carrier 1 domain occupies 1209–1286 (AHGSARLPAL…RLAGHLATRL (78 aa)). Position 1246 is an O-(pantetheine 4'-phosphoryl)serine (serine 1246). Residues 1373-1781 (YEPIAIVGMS…GTNAHVIVEA (409 aa)) enclose the Ketosynthase family 3 (KS3) 2 domain. Residues cysteine 1529, histidine 1664, and histidine 1704 each act as for beta-ketoacyl synthase 2 activity in the active site. Residues 1967-2099 (AREPGARERA…GVVDELNEPA (133 aa)) are N-terminal hotdog fold 1. A PKS/mFAS DH 1 domain is found at 1967–2261 (AREPGARERA…SARWRKLAGA (295 aa)). Catalysis depends on histidine 1999, which acts as the Proton acceptor; for dehydratase activity 1. Residues 2113-2261 (AGERVDGAAL…SARWRKLAGA (149 aa)) form a C-terminal hotdog fold 1 region. The active-site Proton donor; for dehydratase activity 1 is aspartate 2175. The interval 2426–2446 (DADEDDRDGREPAGGPPLRDD) is disordered. The region spanning 2702–2780 (PAARVDLHAL…AIARALDASA (79 aa)) is the Carrier 2 domain. The segment at 2817–2836 (TPPDAGAPQRGAHAAAAEGS) is disordered. Residues 2822-2835 (GAPQRGAHAAAAEG) show a composition bias toward low complexity. The 74-residue stretch at 2862 to 2935 (ARVGARLSAL…ELTDYFVRRH (74 aa)) folds into the Carrier 3 domain. Serine 2896 is subject to O-(pantetheine 4'-phosphoryl)serine. One can recognise a Ketosynthase family 3 (KS3) 3 domain in the interval 3005–3430 (ADAIAVIGLA…GANAHVIVRE (426 aa)). Residues cysteine 3175, histidine 3310, and histidine 3351 each act as for beta-ketoacyl synthase 3 activity in the active site. Positions 3526-3546 (PGKKQLRGNGRARRGDAPPAG) are disordered. The tract at residues 3621-3743 (HPMLDANRSE…GRSPSRAARG (123 aa)) is N-terminal hotdog fold 2. The PKS/mFAS DH 2 domain occupies 3621 to 3895 (HPMLDANRSE…SRAAASWRTA (275 aa)). Histidine 3650 acts as the Proton acceptor; for dehydratase activity 2 in catalysis. Residues 3758 to 3895 (RAAPAFDADA…SRAAASWRTA (138 aa)) are C-terminal hotdog fold 2. Aspartate 3818 (proton donor; for dehydratase activity 2) is an active-site residue. Residues 3917 to 3942 (PAAESPSAATSTSAATSPAISTSAAT) are disordered. Residues 4840-4914 (TRTAALLRSL…ALAAYVGSQL (75 aa)) enclose the Carrier 4 domain. Serine 4874 is modified (O-(pantetheine 4'-phosphoryl)serine). Positions 4960 to 4992 (APRARTGADAPDTSLASSASSISSARASSPASP) are disordered. The region spanning 4998 to 5424 (SFDVAIVGAS…GVNAHVVLEE (427 aa)) is the Ketosynthase family 3 (KS3) 4 domain. Active-site for beta-ketoacyl synthase 4 activity residues include cysteine 5158, histidine 5293, and histidine 5339. Residues 5470 to 5544 (ARIEAVIRDA…ALRDHVAERI (75 aa)) enclose the Carrier 5 domain. Residue serine 5504 is modified to O-(pantetheine 4'-phosphoryl)serine. Residues 5573–5603 (VSEATEASDASEASDASEASEASEASEASKA) are disordered.

Requires pantetheine 4'-phosphate as cofactor.

The protein resides in the cytoplasm. It functions in the pathway antibiotic biosynthesis. Involved in production of the polyketide antibiotic thailandamide. The polypeptide is Polyketide synthase ThaG (Burkholderia thailandensis (strain ATCC 700388 / DSM 13276 / CCUG 48851 / CIP 106301 / E264)).